The sequence spans 396 residues: Ribosomal RNA large subunit methyltransferase G (396 aa).

This sequence belongs to the methyltransferase superfamily. RlmG family.

The protein resides in the cytoplasm. It catalyses the reaction guanosine(1835) in 23S rRNA + S-adenosyl-L-methionine = N(2)-methylguanosine(1835) in 23S rRNA + S-adenosyl-L-homocysteine + H(+). Specifically methylates the guanine in position 1835 (m2G1835) of 23S rRNA. The sequence is that of Ribosomal RNA large subunit methyltransferase G from Yersinia enterocolitica serotype O:8 / biotype 1B (strain NCTC 13174 / 8081).